Consider the following 434-residue polypeptide: Nicotinate phosphoribosyltransferase (434 aa).

His-242 bears the Phosphohistidine; by autocatalysis mark.

Belongs to the NAPRTase family. Post-translationally, transiently phosphorylated on a His residue during the reaction cycle. Phosphorylation strongly increases the affinity for substrates and increases the rate of nicotinate D-ribonucleotide production. Dephosphorylation regenerates the low-affinity form of the enzyme, leading to product release.

The catalysed reaction is nicotinate + 5-phospho-alpha-D-ribose 1-diphosphate + ATP + H2O = nicotinate beta-D-ribonucleotide + ADP + phosphate + diphosphate. The protein operates within cofactor biosynthesis; NAD(+) biosynthesis; nicotinate D-ribonucleotide from nicotinate: step 1/1. Functionally, catalyzes the synthesis of beta-nicotinate D-ribonucleotide from nicotinate and 5-phospho-D-ribose 1-phosphate at the expense of ATP. The sequence is that of Nicotinate phosphoribosyltransferase from Rhizobium leguminosarum bv. trifolii (strain WSM2304).